The following is a 541-amino-acid chain: Calcium-dependent protein kinase 25 (541 aa).

The segment covering 1–11 has biased composition (gly residues); the sequence is MGQCCTGGGKA. The disordered stretch occupies residues 1–74; the sequence is MGQCCTGGGK…AGPIGEVLER (74 aa). A lipid anchor (N-myristoyl glycine) is attached at Gly-2. Residues 38-67 are compositionally biased toward low complexity; it reads AKQQPCSPAAKAAATEAAAAASSSKKPAGP. The region spanning 83 to 341 is the Protein kinase domain; it reads YSIGKELGRG…AFQVLNHPWI (259 aa). ATP-binding positions include 89-97 and Lys-112; that span reads LGRGQFGVT. Catalysis depends on Asp-207, which acts as the Proton acceptor. The tract at residues 347–377 is autoinhibitory domain; the sequence is APDVPLDNVVLNRLKQFRAMNQFKKAALRII. EF-hand domains follow at residues 384-419, 420-455, 456-491, and 493-526; these read EEIK…QGTK, FSDN…MNKM, DREE…QGLY, and ANEI…GSGC. Ca(2+) contacts are provided by Asp-397, Asp-399, Ser-401, Thr-403, Glu-408, Asp-433, Asp-435, Asn-437, Glu-444, Asp-469, Asp-471, Ser-473, Tyr-475, Glu-480, Asp-504, Asn-506, Asp-508, Arg-510, and Glu-515.

It belongs to the protein kinase superfamily. Ser/Thr protein kinase family. CDPK subfamily. As to expression, specifically expressed in heading panicles, spikelets and mature pollen grains. Not expressed in vegetative tissues.

It is found in the membrane. It catalyses the reaction L-seryl-[protein] + ATP = O-phospho-L-seryl-[protein] + ADP + H(+). The enzyme catalyses L-threonyl-[protein] + ATP = O-phospho-L-threonyl-[protein] + ADP + H(+). Activated by calcium. Autophosphorylation may play an important role in the regulation of the kinase activity. Its function is as follows. May play a role in signal transduction pathways that involve calcium as a second messenger. This chain is Calcium-dependent protein kinase 25, found in Oryza sativa subsp. japonica (Rice).